The primary structure comprises 175 residues: Protein MAL2 (175 aa).

The Cytoplasmic portion of the chain corresponds to 1–33 (MSAGGAVPPPPNPAVSFPAPRVTLPAGPDILRT). The region spanning 30 to 174 (ILRTYSGAFV…SLGLALRRWR (145 aa)) is the MARVEL domain. A helical membrane pass occupies residues 34–54 (YSGAFVCLEIVLGGLVWILVA). Residues 55–65 (SSNVPLPLLQG) are Lumenal-facing. Residues 66 to 86 (WVMFVSVTAFFFSLLFLGLFL) traverse the membrane as a helical segment. Residues 87-101 (SGMVTQIDANWNFLD) are Cytoplasmic-facing. A helical membrane pass occupies residues 102-122 (FVYHFIVFVFYFGAFLLEAAA). At 123–148 (TSLHDLQCNTTMTVKPLLNDNQYNIN) the chain is on the lumenal side. The N-linked (GlcNAc...) asparagine glycan is linked to Asn-131. Residues 149–169 (VAATVFAFMTTACYGCSLGLA) form a helical membrane-spanning segment. The Cytoplasmic segment spans residues 170-175 (LRRWRP).

This sequence belongs to the MAL family. As to quaternary structure, interacts with TPD52L2.

Its subcellular location is the cell membrane. The protein localises to the apical cell membrane. Functionally, member of the machinery of polarized transport. Required for the indirect transcytotic route at the step of the egress of the transcytosing cargo from perinuclear endosomes in order for it to travel to the apical surface via a raft-dependent pathway. This is Protein MAL2 (Mal2) from Mus musculus (Mouse).